An 804-amino-acid chain; its full sequence is Leucine--tRNA ligase (804 aa).

Positions 40–51 match the 'HIGH' region motif; the sequence is PYPSGAGLHVGH. The 'KMSKS' region signature appears at 576–580; sequence KMSKS. Residue lysine 579 coordinates ATP.

Belongs to the class-I aminoacyl-tRNA synthetase family.

It is found in the cytoplasm. The catalysed reaction is tRNA(Leu) + L-leucine + ATP = L-leucyl-tRNA(Leu) + AMP + diphosphate. The sequence is that of Leucine--tRNA ligase from Staphylococcus aureus (strain Mu3 / ATCC 700698).